Consider the following 382-residue polypeptide: Anhydro-N-acetylmuramic acid kinase (382 aa).

Residue 9-16 (GTSLDGID) participates in ATP binding.

This sequence belongs to the anhydro-N-acetylmuramic acid kinase family.

It catalyses the reaction 1,6-anhydro-N-acetyl-beta-muramate + ATP + H2O = N-acetyl-D-muramate 6-phosphate + ADP + H(+). Its pathway is amino-sugar metabolism; 1,6-anhydro-N-acetylmuramate degradation. The protein operates within cell wall biogenesis; peptidoglycan recycling. Its function is as follows. Catalyzes the specific phosphorylation of 1,6-anhydro-N-acetylmuramic acid (anhMurNAc) with the simultaneous cleavage of the 1,6-anhydro ring, generating MurNAc-6-P. Is required for the utilization of anhMurNAc either imported from the medium or derived from its own cell wall murein, and thus plays a role in cell wall recycling. This chain is Anhydro-N-acetylmuramic acid kinase, found in Bacillus cereus (strain Q1).